Consider the following 151-residue polypeptide: D-aminoacyl-tRNA deacylase (151 aa).

A Gly-cisPro motif, important for rejection of L-amino acids motif is present at residues 137–138 (GP).

This sequence belongs to the DTD family. As to quaternary structure, homodimer.

It is found in the cytoplasm. It catalyses the reaction glycyl-tRNA(Ala) + H2O = tRNA(Ala) + glycine + H(+). The catalysed reaction is a D-aminoacyl-tRNA + H2O = a tRNA + a D-alpha-amino acid + H(+). In terms of biological role, an aminoacyl-tRNA editing enzyme that deacylates mischarged D-aminoacyl-tRNAs. Also deacylates mischarged glycyl-tRNA(Ala), protecting cells against glycine mischarging by AlaRS. Acts via tRNA-based rather than protein-based catalysis; rejects L-amino acids rather than detecting D-amino acids in the active site. By recycling D-aminoacyl-tRNA to D-amino acids and free tRNA molecules, this enzyme counteracts the toxicity associated with the formation of D-aminoacyl-tRNA entities in vivo and helps enforce protein L-homochirality. This is D-aminoacyl-tRNA deacylase from Azoarcus sp. (strain BH72).